The primary structure comprises 374 residues: UPF0496 protein At4g34320 (374 aa).

2 helical membrane passes run 215–235 and 238–258; these read IIFV…AAMA and PVAA…GKWI.

It belongs to the UPF0496 family.

The protein localises to the membrane. In Arabidopsis thaliana (Mouse-ear cress), this protein is UPF0496 protein At4g34320.